A 752-amino-acid chain; its full sequence is Polyribonucleotide nucleotidyltransferase (752 aa).

Asp542 and Asp548 together coordinate Mg(2+). The KH domain maps to Pro608 to Ile667. The 70-residue stretch at Gly679–Val748 folds into the S1 motif domain.

The protein belongs to the polyribonucleotide nucleotidyltransferase family. The cofactor is Mg(2+).

The protein localises to the cytoplasm. It carries out the reaction RNA(n+1) + phosphate = RNA(n) + a ribonucleoside 5'-diphosphate. In terms of biological role, involved in mRNA degradation. Catalyzes the phosphorolysis of single-stranded polyribonucleotides processively in the 3'- to 5'-direction. This chain is Polyribonucleotide nucleotidyltransferase, found in Corynebacterium efficiens (strain DSM 44549 / YS-314 / AJ 12310 / JCM 11189 / NBRC 100395).